Reading from the N-terminus, the 1413-residue chain is Alpha-latrocrustotoxin-Lt1a (1413 aa).

A propeptide spanning residues 1–28 (VSIFIFHFSANILVRNSEMKGKRVISKR) is cleaved from the precursor. Positions 238–257 (ALFALFYGTQTFISIMFYLV) are helix H8 is the probable transmembrane region of the tetrameric pore inserted in the target cell membrane. ANK repeat units follow at residues 457 to 490 (DIHR…QVGA), 494 to 524 (MGRK…LLNV), 528 to 557 (NGYT…DVNV), 562 to 592 (NELT…DVNA), 596 to 625 (AGFT…GINI), 629 to 658 (SGLT…KVKL), 664 to 694 (NGMT…DVNA), 699 to 729 (KNWT…DIST), 733 to 762 (QAIT…VVDQ), 766 to 795 (NGFT…NINA), 799 to 828 (DGST…NIKA), 832 to 861 (INQM…SLMN), 866 to 895 (RDEY…DVNE), 899 to 928 (DGNT…DFRL), 965 to 995 (RGKT…TLNE), 996 to 1026 (DQCS…NPTA), 1031 to 1072 (NQVS…DINK), 1077 to 1106 (QQST…DPNK), 1109 to 1139 (RGDP…DVNT), and 1143 to 1172 (EQFT…DVNA). The propeptide occupies 1193 to 1413 (RSLGRRFFRN…NRPTNVLQIK (221 aa)).

Belongs to the cationic peptide 01 (latrotoxin) family. 01 (alpha-latrocrustotoxin) subfamily. In terms of assembly, homotetramer in membranes. In terms of tissue distribution, expressed by the venom gland.

The protein resides in the secreted. It is found in the target cell membrane. Crustacean-selective presynaptic neurotoxin that induces neurotransmitter exocytosis. May bind to crustacean neurexin-1 homolog, adhesion G protein-coupled receptor L1 homolog, and receptor-type tyrosine-protein phosphatase S homolog, and induces neurotransmitter exocytosis both by forming tetrameric pores in membranes and signaling via G protein-coupled receptor. This recombinant protein form channels in artificial membrane bilayers, that are stabilized by calcium ions and allow calcium flux at negative membrane potentials. The sequence is that of Alpha-latrocrustotoxin-Lt1a from Latrodectus tredecimguttatus (Mediterranean black widow spider).